Consider the following 207-residue polypeptide: Guanylate kinase (207 aa).

The Guanylate kinase-like domain occupies 4 to 184 (GLLFIVSAPS…AVSDLYKIIR (181 aa)). An ATP-binding site is contributed by 11–18 (APSGTGKS).

The protein belongs to the guanylate kinase family.

Its subcellular location is the cytoplasm. The catalysed reaction is GMP + ATP = GDP + ADP. In terms of biological role, essential for recycling GMP and indirectly, cGMP. The sequence is that of Guanylate kinase from Buchnera aphidicola subsp. Baizongia pistaciae (strain Bp).